We begin with the raw amino-acid sequence, 441 residues long: Interferon-related developmental regulator 2 (441 aa).

Residues 1 to 15 (MPRARKGNTPRKGGQ) show a composition bias toward basic residues. A disordered region spans residues 1 to 72 (MPRARKGNTP…TVDEQGPQED (72 aa)). Positions 63–72 (TVDEQGPQED) are enriched in acidic residues.

It belongs to the IFRD family. Associates with ribosomes; promoting ribosome inactivation.

Functionally, ribosome-binding protein that acts as an inhibitor of mRNA translation by promoting ribosome inactivation. Associates with the P- and E-sites of the ribosome and inserts a C-terminal helix into the mRNA exit channel to preclude translation. The polypeptide is Interferon-related developmental regulator 2 (Oryctolagus cuniculus (Rabbit)).